The following is a 213-amino-acid chain: Adenylate kinase (213 aa).

An ATP-binding site is contributed by Gly10 to Thr15. Positions Ser30 to Val59 are NMP. AMP is bound by residues Thr31, Arg36, Asp57–Val59, Gly86–Arg89, and Gln93. Residues Gly127–Asp160 form an LID region. ATP-binding positions include Arg128 and Thr137–Phe138. Residues Arg157 and Arg168 each contribute to the AMP site. Lys196 contributes to the ATP binding site.

Belongs to the adenylate kinase family. As to quaternary structure, monomer.

It is found in the cytoplasm. The enzyme catalyses AMP + ATP = 2 ADP. It functions in the pathway purine metabolism; AMP biosynthesis via salvage pathway; AMP from ADP: step 1/1. Its function is as follows. Catalyzes the reversible transfer of the terminal phosphate group between ATP and AMP. Plays an important role in cellular energy homeostasis and in adenine nucleotide metabolism. The protein is Adenylate kinase of Streptococcus equi subsp. equi (strain 4047).